The following is a 512-amino-acid chain: 2-isopropylmalate synthase (512 aa).

The Pyruvate carboxyltransferase domain occupies 4-266 (IEIFDTTLRD…TTKLNLKEIA (263 aa)). 4 residues coordinate Mn(2+): D13, H201, H203, and N237. The regulatory domain stretch occupies residues 390-512 (QLESVQLAYG…GEPTPVSATI (123 aa)).

Belongs to the alpha-IPM synthase/homocitrate synthase family. LeuA type 1 subfamily. In terms of assembly, homodimer. It depends on Mn(2+) as a cofactor.

The protein localises to the cytoplasm. It catalyses the reaction 3-methyl-2-oxobutanoate + acetyl-CoA + H2O = (2S)-2-isopropylmalate + CoA + H(+). It participates in amino-acid biosynthesis; L-leucine biosynthesis; L-leucine from 3-methyl-2-oxobutanoate: step 1/4. Its function is as follows. Catalyzes the condensation of the acetyl group of acetyl-CoA with 3-methyl-2-oxobutanoate (2-ketoisovalerate) to form 3-carboxy-3-hydroxy-4-methylpentanoate (2-isopropylmalate). This Brevibacillus brevis (strain 47 / JCM 6285 / NBRC 100599) protein is 2-isopropylmalate synthase.